The primary structure comprises 78 residues: D-alanyl carrier protein (78 aa).

Positions 1-78 (MAFRENVLEI…MIITQLEALK (78 aa)) constitute a Carrier domain. Serine 36 is subject to O-(pantetheine 4'-phosphoryl)serine.

This sequence belongs to the DltC family. In terms of processing, 4'-phosphopantetheine is transferred from CoA to a specific serine of apo-DCP.

It localises to the cytoplasm. The protein operates within cell wall biogenesis; lipoteichoic acid biosynthesis. Carrier protein involved in the D-alanylation of lipoteichoic acid (LTA). The loading of thioester-linked D-alanine onto DltC is catalyzed by D-alanine--D-alanyl carrier protein ligase DltA. The DltC-carried D-alanyl group is further transferred to cell membrane phosphatidylglycerol (PG) by forming an ester bond, probably catalyzed by DltD. D-alanylation of LTA plays an important role in modulating the properties of the cell wall in Gram-positive bacteria, influencing the net charge of the cell wall. The polypeptide is D-alanyl carrier protein (Listeria welshimeri serovar 6b (strain ATCC 35897 / DSM 20650 / CCUG 15529 / CIP 8149 / NCTC 11857 / SLCC 5334 / V8)).